The following is a 218-amino-acid chain: LexA repressor (218 aa).

Residues 31 to 51 (IREIQDGLRISSTSVVAYNLR) constitute a DNA-binding region (H-T-H motif). Active-site for autocatalytic cleavage activity residues include S137 and K176.

The protein belongs to the peptidase S24 family. In terms of assembly, homodimer.

It catalyses the reaction Hydrolysis of Ala-|-Gly bond in repressor LexA.. Functionally, represses a number of genes involved in the response to DNA damage (SOS response), including recA and lexA. In the presence of single-stranded DNA, RecA interacts with LexA causing an autocatalytic cleavage which disrupts the DNA-binding part of LexA, leading to derepression of the SOS regulon and eventually DNA repair. This chain is LexA repressor, found in Roseiflexus sp. (strain RS-1).